Consider the following 201-residue polypeptide: Small ribosomal subunit protein uS4c (201 aa).

The interval 20–44 (GLTSKRPRAGSDLRNQSRSGKKSQY) is disordered. An S4 RNA-binding domain is found at 89-152 (MRLDNTLFRL…NSRTLVQNLL (64 aa)).

The protein belongs to the universal ribosomal protein uS4 family. As to quaternary structure, part of the 30S ribosomal subunit. Contacts protein S5. The interaction surface between S4 and S5 is involved in control of translational fidelity.

It is found in the plastid. It localises to the chloroplast. Its function is as follows. One of the primary rRNA binding proteins, it binds directly to 16S rRNA where it nucleates assembly of the body of the 30S subunit. Functionally, with S5 and S12 plays an important role in translational accuracy. This Aethionema grandiflorum (Persian stone-cress) protein is Small ribosomal subunit protein uS4c (rps4).